The sequence spans 327 residues: Glycerol-3-phosphate dehydrogenase [NAD(P)+] (327 aa).

Residues tryptophan 11, histidine 30, and lysine 103 each coordinate NADPH. The sn-glycerol 3-phosphate site is built by lysine 103, glycine 131, and serine 133. Residue alanine 135 coordinates NADPH. 5 residues coordinate sn-glycerol 3-phosphate: lysine 186, aspartate 243, serine 253, arginine 254, and asparagine 255. The active-site Proton acceptor is the lysine 186. Arginine 254 contributes to the NADPH binding site. NADPH is bound by residues valine 281 and glutamate 283.

It belongs to the NAD-dependent glycerol-3-phosphate dehydrogenase family.

The protein resides in the cytoplasm. The enzyme catalyses sn-glycerol 3-phosphate + NAD(+) = dihydroxyacetone phosphate + NADH + H(+). The catalysed reaction is sn-glycerol 3-phosphate + NADP(+) = dihydroxyacetone phosphate + NADPH + H(+). It functions in the pathway membrane lipid metabolism; glycerophospholipid metabolism. Its function is as follows. Catalyzes the reduction of the glycolytic intermediate dihydroxyacetone phosphate (DHAP) to sn-glycerol 3-phosphate (G3P), the key precursor for phospholipid synthesis. The chain is Glycerol-3-phosphate dehydrogenase [NAD(P)+] from Wolbachia pipientis wMel.